The following is a 522-amino-acid chain: MSSLPQYCECGLGECRTDVLPLLYEMSQIATESGDLSSIISILLRLMKRHMKVVRGMVTLYDRDSGSIVLHESFGLSPEEAGKGVYLLGEGIIGRVVETGQSIVVPCIRDEPAFLNRTGSRDRDSDDANLSFICVPILRGRQVMGTISAERLYDNAELLKLDVEVLSILATTTAQAVELYLVENVENVALEAENRRLRSALGERFKPANIIGNSKPMLEVYQLIERVVRTRTTVLILGESGVGKELVAGAIHYNSPAAKGPFVKFNCASLPESVIESELFGHEKGSFTGAIGLRKGRFEEAAGGTIFLDEVGEMSLTTQAKLLRVLQERSFERVGGNTTIHVDLRVIAATNRNLAEMVADGTFAEDLYYRLNVFPITIPPLRERGSDIITLADHFVSRFSREMGIEVNRISTPRLNMLQSYQWPGNVRELENVIERAMLLSEDGVIHGYHLPPSLQAPVVGDSEAPPDGLEARLGAIEYELIVEALKLHHGNMTEAATHLGLTARVLGLRMGKYNLNYKDYR.

An a domain region spans residues 22–183 (LLYEMSQIAT…AQAVELYLVE (162 aa)). The region spanning 35–177 (DLSSIISILL…ILATTTAQAV (143 aa)) is the GAF domain. Residues 210–439 (IIGNSKPMLE…LENVIERAML (230 aa)) enclose the Sigma-54 factor interaction domain. ATP is bound by residues 238–245 (GESGVGKE) and 301–310 (AAGGTIFLDE). Positions 493–512 (MTEAATHLGLTARVLGLRMG) form a DNA-binding region, H-T-H motif.

Required for the expression of the V-dependent nitrogen fixation system in Azotobacter vinelandii. It is required for the regulation of nitrogenase 2 transcription. Interacts with sigma-54. The sequence is that of Nitrogen fixation protein VnfA (vnfA) from Azotobacter vinelandii.